Reading from the N-terminus, the 645-residue chain is Heat shock protein SSA2 (645 aa).

The residue at position 2 (Ser2) is an N-acetylserine. The tract at residues 581–645 (ANQTATQEEF…NDGPTVEEVD (65 aa)) is disordered. The segment covering 611 to 621 (AGATPSGAAGA) has biased composition (low complexity).

The protein belongs to the heat shock protein 70 family. Binds human histatin-5, an antifungal peptide from saliva.

Its subcellular location is the cytoplasm. It localises to the secreted. It is found in the cell wall. Its function is as follows. Heat shock protein that may play a role in the transport of polypeptides both across the mitochondrial membranes and into the endoplasmic reticulum. Functionally, acts as a highly immunodominant antigen. Plays a role in the sensitivity to, and the import of candidacidal beta-defensin peptides. HSP70/SSA1 and SSA2 bind histatin-5, a peptide from human saliva, and mediates its fungicidal activity. SSA2 facilitates fungicidal activity of Hst 5 in binding and intracellular translocation, whereas HSP70/SSA1 appears to have a lesser functional role in Hst 5 toxicity. The protein is Heat shock protein SSA2 of Candida albicans (strain SC5314 / ATCC MYA-2876) (Yeast).